An 841-amino-acid chain; its full sequence is Probable alpha-glucuronidase A (841 aa).

Residues 1-19 (MLRLPLVLVWSLWASLTVA) form the signal peptide. 12 N-linked (GlcNAc...) asparagine glycosylation sites follow: Asn50, Asn104, Asn223, Asn280, Asn311, Asn344, Asn466, Asn528, Asn577, Asn683, Asn724, and Asn733.

Belongs to the glycosyl hydrolase 67 family.

It is found in the secreted. The catalysed reaction is an alpha-D-glucuronoside + H2O = D-glucuronate + an alcohol. Its function is as follows. Alpha-glucuronidase involved in the hydrolysis of xylan, a major structural heterogeneous polysaccharide found in plant biomass representing the second most abundant polysaccharide in the biosphere, after cellulose. Releases 4-O-methylglucuronic acid from xylan. This is Probable alpha-glucuronidase A (aguA) from Aspergillus terreus (strain NIH 2624 / FGSC A1156).